A 361-amino-acid chain; its full sequence is MAPPNKFRINAKNYFLTYPHCSLTKEEALSQIKTLETPVNKLFIRICRELHEDGSPHLHVLIQFEGKFQCKNQRFFDLTSPHRSAHFHPNIQGAKSSTDVKSYMEKDGDVLDHGVFQIDGRSARGGCQSANDAYAEAINSGSKASALNILREKAPKDFVLQFHNLNSNLDRIFTPPIVEYISPFSSSSFDQVPEELDEWAVDNVVSAAARPLRPVSIVIEGDSRTGKTMWARSLGPHNYLCGHLDLSPKVYSNDAWFNVIDDVDPHYLKHFKEFMGAQRDWQSNTKYGKPVQIKGGIPTIFLCNPGPNSSYKEYLEEEKNSALRNWAVKNAIFVSLNGPLYSGSYQGATPNRQEDNQTTTG.

The CRESS-DNA virus Rep endonuclease domain maps to R8 to F116. Positions F15 to Y18 match the RCR-1 motif. A divalent metal cation contacts are provided by E49, H57, and H59. The RCR-2 signature appears at H57–H59. Y103 (for DNA cleavage activity) is an active-site residue. An RCR-3 motif is present at residues Y103 to K106. D107 is an a divalent metal cation binding site. The interval K143–K153 is binding to RBR1. Residues K156–P176 form an oligomerization region. G221–T228 contributes to the ATP binding site.

The protein belongs to the geminiviridae Rep protein family. In terms of assembly, homooligomer. Interacts with the replication enhancer protein (REn). Interacts with host retinoblastoma-related protein 1 (RBR1), and may thereby induce the transcription of host replicative enzymes even if the cell is not dividing anymore. Interacts with host PCNA. Interacts with host SCE1 protein. It depends on Mg(2+) as a cofactor. Mn(2+) is required as a cofactor.

Its subcellular location is the host nucleus. Functionally, essential for the replication of viral ssDNA. The closed circular ssDNA genome is first converted to a superhelical dsDNA. Rep binds a specific region at the genome origin of replication. It introduces an endonucleolytic nick within the conserved sequence 5'-TAATATTAC-3' in the intergenic region of the genome present in all geminiviruses, thereby initiating the rolling circle replication (RCR). Following cleavage, binds covalently to the 5'-phosphate of DNA as a tyrosyl ester. The cleavage gives rise to a free 3'-OH that serves as a primer for the cellular DNA polymerase. The polymerase synthesizes the (+) strand DNA by rolling circle mechanism. After one round of replication, a Rep-catalyzed nucleotidyl transfer reaction releases a circular single-stranded virus genome, thereby terminating the replication. Displays origin-specific DNA cleavage, nucleotidyl transferase, ATPase and helicase activities. This chain is Replication-associated protein, found in Tomato yellow leaf curl China virus (TYLCCNV).